We begin with the raw amino-acid sequence, 64 residues long: Alpha-mammal toxin BmK-M8 (64 aa).

Positions 2 to 64 (RDAYIADSEN…ERIKEPGKCG (63 aa)) constitute an LCN-type CS-alpha/beta domain. 4 cysteine pairs are disulfide-bonded: C12–C63, C16–C36, C22–C46, and C26–C48.

Belongs to the long (4 C-C) scorpion toxin superfamily. Sodium channel inhibitor family. Alpha subfamily. Expressed by the venom gland.

It localises to the secreted. In terms of biological role, alpha toxins bind voltage-independently at site-3 of sodium channels (Nav) and inhibit the inactivation of the activated channels, thereby blocking neuronal transmission. This acidic toxin has a weak toxicity and is active against mammals. This Olivierus martensii (Manchurian scorpion) protein is Alpha-mammal toxin BmK-M8.